The following is a 396-amino-acid chain: CCA-adding enzyme (396 aa).

ATP-binding residues include Gly32 and Arg35. The CTP site is built by Gly32 and Arg35. Residues Asp45 and Asp47 each contribute to the Mg(2+) site. Arg116, Asp159, Arg162, Arg165, and Arg168 together coordinate ATP. CTP contacts are provided by Arg116, Asp159, Arg162, Arg165, and Arg168.

Belongs to the tRNA nucleotidyltransferase/poly(A) polymerase family. Bacterial CCA-adding enzyme type 3 subfamily. Homodimer. The cofactor is Mg(2+).

The catalysed reaction is a tRNA precursor + 2 CTP + ATP = a tRNA with a 3' CCA end + 3 diphosphate. The enzyme catalyses a tRNA with a 3' CCA end + 2 CTP + ATP = a tRNA with a 3' CCACCA end + 3 diphosphate. In terms of biological role, catalyzes the addition and repair of the essential 3'-terminal CCA sequence in tRNAs without using a nucleic acid template. Adds these three nucleotides in the order of C, C, and A to the tRNA nucleotide-73, using CTP and ATP as substrates and producing inorganic pyrophosphate. tRNA 3'-terminal CCA addition is required both for tRNA processing and repair. Also involved in tRNA surveillance by mediating tandem CCA addition to generate a CCACCA at the 3' terminus of unstable tRNAs. While stable tRNAs receive only 3'-terminal CCA, unstable tRNAs are marked with CCACCA and rapidly degraded. This is CCA-adding enzyme from Lactobacillus delbrueckii subsp. bulgaricus (strain ATCC 11842 / DSM 20081 / BCRC 10696 / JCM 1002 / NBRC 13953 / NCIMB 11778 / NCTC 12712 / WDCM 00102 / Lb 14).